The following is a 251-amino-acid chain: Phosphate import ATP-binding protein PstB (251 aa).

One can recognise an ABC transporter domain in the interval 5 to 246 (MNSKDVNFWY…PENKKTEDYI (242 aa)). 37–44 (GPSGCGKS) lines the ATP pocket.

Belongs to the ABC transporter superfamily. Phosphate importer (TC 3.A.1.7) family. As to quaternary structure, the complex is composed of two ATP-binding proteins (PstB), two transmembrane proteins (PstC and PstA) and a solute-binding protein (PstS).

The protein localises to the cell membrane. The enzyme catalyses phosphate(out) + ATP + H2O = ADP + 2 phosphate(in) + H(+). Functionally, part of the ABC transporter complex PstSACB involved in phosphate import. Responsible for energy coupling to the transport system. In Methanococcus maripaludis (strain DSM 14266 / JCM 13030 / NBRC 101832 / S2 / LL), this protein is Phosphate import ATP-binding protein PstB.